A 168-amino-acid chain; its full sequence is Photosystem I assembly protein Ycf3 (168 aa).

TPR repeat units lie at residues Ala35–Pro68, Ser72–Leu105, and Gly120–Asn153.

It belongs to the Ycf3 family. Interacts with Y3IP1.

Its subcellular location is the plastid. It is found in the chloroplast thylakoid membrane. Functionally, essential for the assembly of the photosystem I (PSI) complex. May act as a chaperone-like factor to guide the assembly of the PSI subunits. This is Photosystem I assembly protein Ycf3 from Arabidopsis thaliana (Mouse-ear cress).